We begin with the raw amino-acid sequence, 285 residues long: Bifunctional protein FolD (285 aa).

Residues 165–167 and Ser190 each bind NADP(+); that span reads GRS.

Belongs to the tetrahydrofolate dehydrogenase/cyclohydrolase family. In terms of assembly, homodimer.

The enzyme catalyses (6R)-5,10-methylene-5,6,7,8-tetrahydrofolate + NADP(+) = (6R)-5,10-methenyltetrahydrofolate + NADPH. It catalyses the reaction (6R)-5,10-methenyltetrahydrofolate + H2O = (6R)-10-formyltetrahydrofolate + H(+). The protein operates within one-carbon metabolism; tetrahydrofolate interconversion. Functionally, catalyzes the oxidation of 5,10-methylenetetrahydrofolate to 5,10-methenyltetrahydrofolate and then the hydrolysis of 5,10-methenyltetrahydrofolate to 10-formyltetrahydrofolate. This is Bifunctional protein FolD from Burkholderia cenocepacia (strain HI2424).